A 380-amino-acid chain; its full sequence is Succinyl-diaminopimelate desuccinylase (380 aa).

A Zn(2+)-binding site is contributed by H71. D73 is an active-site residue. Residue D104 coordinates Zn(2+). The Proton acceptor role is filled by E136. Zn(2+) is bound by residues E137, E166, and H351.

Belongs to the peptidase M20A family. DapE subfamily. As to quaternary structure, homodimer. Zn(2+) is required as a cofactor. It depends on Co(2+) as a cofactor.

The catalysed reaction is N-succinyl-(2S,6S)-2,6-diaminopimelate + H2O = (2S,6S)-2,6-diaminopimelate + succinate. Its pathway is amino-acid biosynthesis; L-lysine biosynthesis via DAP pathway; LL-2,6-diaminopimelate from (S)-tetrahydrodipicolinate (succinylase route): step 3/3. Catalyzes the hydrolysis of N-succinyl-L,L-diaminopimelic acid (SDAP), forming succinate and LL-2,6-diaminopimelate (DAP), an intermediate involved in the bacterial biosynthesis of lysine and meso-diaminopimelic acid, an essential component of bacterial cell walls. The chain is Succinyl-diaminopimelate desuccinylase from Ehrlichia canis (strain Jake).